We begin with the raw amino-acid sequence, 192 residues long: Ion-translocating oxidoreductase complex subunit A (192 aa).

A run of 6 helical transmembrane segments spans residues 5-25, 39-59, 65-85, 102-122, 134-154, and 171-191; these read LLLL…FLGL, IGMS…SYLV, LPFD…AVVV, ALGI…VALL, AIYG…FSAM, and AIAM…TGLV.

Belongs to the NqrDE/RnfAE family. The complex is composed of six subunits: RnfA, RnfB, RnfC, RnfD, RnfE and RnfG.

Its subcellular location is the cell inner membrane. Part of a membrane-bound complex that couples electron transfer with translocation of ions across the membrane. In Shewanella oneidensis (strain ATCC 700550 / JCM 31522 / CIP 106686 / LMG 19005 / NCIMB 14063 / MR-1), this protein is Ion-translocating oxidoreductase complex subunit A.